Here is a 338-residue protein sequence, read N- to C-terminus: Ketol-acid reductoisomerase (NADP(+)) (338 aa).

Residues 2 to 182 (TKMYYEEDTD…GGARAGVLET (181 aa)) enclose the KARI N-terminal Rossmann domain. Residues 25–28 (YGSQ), Ser-51, Ser-53, and 83–86 (DELQ) each bind NADP(+). The active site involves His-108. Position 134 (Gly-134) interacts with NADP(+). The region spanning 183-330 (TFRTETETDL…SEIRKLYCWN (148 aa)) is the KARI C-terminal knotted domain. Asp-191, Glu-195, Glu-227, and Glu-231 together coordinate Mg(2+). Ser-252 lines the substrate pocket.

It belongs to the ketol-acid reductoisomerase family. Mg(2+) is required as a cofactor.

It catalyses the reaction (2R)-2,3-dihydroxy-3-methylbutanoate + NADP(+) = (2S)-2-acetolactate + NADPH + H(+). It carries out the reaction (2R,3R)-2,3-dihydroxy-3-methylpentanoate + NADP(+) = (S)-2-ethyl-2-hydroxy-3-oxobutanoate + NADPH + H(+). The protein operates within amino-acid biosynthesis; L-isoleucine biosynthesis; L-isoleucine from 2-oxobutanoate: step 2/4. It participates in amino-acid biosynthesis; L-valine biosynthesis; L-valine from pyruvate: step 2/4. In terms of biological role, involved in the biosynthesis of branched-chain amino acids (BCAA). Catalyzes an alkyl-migration followed by a ketol-acid reduction of (S)-2-acetolactate (S2AL) to yield (R)-2,3-dihydroxy-isovalerate. In the isomerase reaction, S2AL is rearranged via a Mg-dependent methyl migration to produce 3-hydroxy-3-methyl-2-ketobutyrate (HMKB). In the reductase reaction, this 2-ketoacid undergoes a metal-dependent reduction by NADPH to yield (R)-2,3-dihydroxy-isovalerate. The chain is Ketol-acid reductoisomerase (NADP(+)) from Clostridium botulinum (strain Eklund 17B / Type B).